Reading from the N-terminus, the 301-residue chain is Methionyl-tRNA formyltransferase (301 aa).

(6S)-5,6,7,8-tetrahydrofolate is bound at residue 110-113 (SLLP).

Belongs to the Fmt family.

The enzyme catalyses L-methionyl-tRNA(fMet) + (6R)-10-formyltetrahydrofolate = N-formyl-L-methionyl-tRNA(fMet) + (6S)-5,6,7,8-tetrahydrofolate + H(+). Its function is as follows. Attaches a formyl group to the free amino group of methionyl-tRNA(fMet). The formyl group appears to play a dual role in the initiator identity of N-formylmethionyl-tRNA by promoting its recognition by IF2 and preventing the misappropriation of this tRNA by the elongation apparatus. The chain is Methionyl-tRNA formyltransferase from Acidiphilium cryptum (strain JF-5).